The primary structure comprises 250 residues: MSKIKSIYGIHAVSGVLDAAPQRIVKLYVQENRDDQRLQSLVEKAKALGVKVILLSRTELNTLSNEKHQGIVADCEEVENLDESALLSLLKKRETPALLLILDGVKDPHNLGACLRSANAFGVRAVIAPKDRAVGVTPVVRKVACGAAEMTPFIRVTNLSRTIDWLQKEGVWIVGTAVEAETLIQEIDLTGDIAIVLGSEGAGLRRLTKERCDFLAQIPLRGSVESLNVSVACGICLYEVQRQREAPAPS.

Positions 198, 218, and 227 each coordinate S-adenosyl-L-methionine.

The protein belongs to the class IV-like SAM-binding methyltransferase superfamily. RNA methyltransferase TrmH family. RlmB subfamily.

Its subcellular location is the cytoplasm. The catalysed reaction is guanosine(2251) in 23S rRNA + S-adenosyl-L-methionine = 2'-O-methylguanosine(2251) in 23S rRNA + S-adenosyl-L-homocysteine + H(+). Its function is as follows. Specifically methylates the ribose of guanosine 2251 in 23S rRNA. The protein is 23S rRNA (guanosine-2'-O-)-methyltransferase RlmB of Coxiella burnetii (strain RSA 493 / Nine Mile phase I).